The sequence spans 577 residues: Arginine--tRNA ligase (577 aa).

Residues Pro122–His132 carry the 'HIGH' region motif.

The protein belongs to the class-I aminoacyl-tRNA synthetase family. As to quaternary structure, monomer.

The protein localises to the cytoplasm. The catalysed reaction is tRNA(Arg) + L-arginine + ATP = L-arginyl-tRNA(Arg) + AMP + diphosphate. This is Arginine--tRNA ligase from Edwardsiella ictaluri (strain 93-146).